The following is an 873-amino-acid chain: Probable beta-glucosidase A (873 aa).

A signal peptide spans 1-19; it reads MRFGWLEVAALTAASVANA. Residues Asn71, Asn222, and Asn263 are each glycosylated (N-linked (GlcNAc...) asparagine). Asp291 is an active-site residue. N-linked (GlcNAc...) asparagine glycans are attached at residues Asn326, Asn333, Asn365, Asn453, Asn534, Asn553, Asn575, Asn679, and Asn725. The segment at 731–764 is disordered; the sequence is DSSDDPNYGWQDSEYIPEGARDGSPQPLLKAGGA.

This sequence belongs to the glycosyl hydrolase 3 family.

The protein localises to the secreted. The catalysed reaction is Hydrolysis of terminal, non-reducing beta-D-glucosyl residues with release of beta-D-glucose.. The protein operates within glycan metabolism; cellulose degradation. Functionally, beta-glucosidases are one of a number of cellulolytic enzymes involved in the degradation of cellulosic biomass. Catalyzes the last step releasing glucose from the inhibitory cellobiose. The polypeptide is Probable beta-glucosidase A (bglA) (Aspergillus fumigatus (strain ATCC MYA-4609 / CBS 101355 / FGSC A1100 / Af293) (Neosartorya fumigata)).